Reading from the N-terminus, the 219-residue chain is Auxin-responsive protein IAA24 (219 aa).

Residues 24-28 (LCLRL) carry the EAR-like (transcriptional repression) motif. Disordered regions lie at residues 24–88 (LCLR…AKAQ) and 109–128 (AAAATKKGGDEKQKQQQQGG). Residues 60–71 (STDSMASGTGTS) show a composition bias toward polar residues. In terms of domain architecture, PB1 spans 129–215 (GLYVKVSMDG…SCKKLRIMKG (87 aa)).

Belongs to the Aux/IAA family. As to quaternary structure, homodimers and heterodimers. In terms of tissue distribution, highly expressed in flowers. Expressed in seedlings.

It is found in the nucleus. Its function is as follows. Aux/IAA proteins are short-lived transcriptional factors that function as repressors of early auxin response genes at low auxin concentrations. In Oryza sativa subsp. japonica (Rice), this protein is Auxin-responsive protein IAA24 (IAA24).